The following is a 306-amino-acid chain: tRNA dimethylallyltransferase (306 aa).

Position 12 to 19 (12 to 19 (GPTAAGKT)) interacts with ATP. 14–19 (TAAGKT) is a binding site for substrate. Interaction with substrate tRNA regions lie at residues 37-40 (DSAL), 161-165 (QRINR), and 242-247 (RCVGYR).

The protein belongs to the IPP transferase family. In terms of assembly, monomer. Mg(2+) serves as cofactor.

The enzyme catalyses adenosine(37) in tRNA + dimethylallyl diphosphate = N(6)-dimethylallyladenosine(37) in tRNA + diphosphate. Catalyzes the transfer of a dimethylallyl group onto the adenine at position 37 in tRNAs that read codons beginning with uridine, leading to the formation of N6-(dimethylallyl)adenosine (i(6)A). The protein is tRNA dimethylallyltransferase of Pseudoalteromonas translucida (strain TAC 125).